Reading from the N-terminus, the 345-residue chain is Methionine import ATP-binding protein MetN (345 aa).

One can recognise an ABC transporter domain in the interval 2 to 241 (IKLNNITKIF…PKTELAQEFI (240 aa)). 38–45 (GASGAGKS) provides a ligand contact to ATP.

Belongs to the ABC transporter superfamily. Methionine importer (TC 3.A.1.24) family. As to quaternary structure, the complex is composed of two ATP-binding proteins (MetN), two transmembrane proteins (MetI) and a solute-binding protein (MetQ).

Its subcellular location is the cell inner membrane. The catalysed reaction is L-methionine(out) + ATP + H2O = L-methionine(in) + ADP + phosphate + H(+). It carries out the reaction D-methionine(out) + ATP + H2O = D-methionine(in) + ADP + phosphate + H(+). In terms of biological role, part of the ABC transporter complex MetNIQ involved in methionine import. Responsible for energy coupling to the transport system. This is Methionine import ATP-binding protein MetN from Haemophilus influenzae (strain 86-028NP).